A 212-amino-acid polypeptide reads, in one-letter code: Cytidylate kinase (212 aa).

7-15 lines the ATP pocket; the sequence is GPAASGKGT.

The protein belongs to the cytidylate kinase family. Type 1 subfamily.

It localises to the cytoplasm. It carries out the reaction CMP + ATP = CDP + ADP. It catalyses the reaction dCMP + ATP = dCDP + ADP. The chain is Cytidylate kinase from Rhodopseudomonas palustris (strain HaA2).